We begin with the raw amino-acid sequence, 556 residues long: Arginine--tRNA ligase (556 aa).

A 'HIGH' region motif is present at residues 132–142; that stretch reads ANPTGDLHLGH.

The protein belongs to the class-I aminoacyl-tRNA synthetase family. As to quaternary structure, monomer.

The protein resides in the cytoplasm. The enzyme catalyses tRNA(Arg) + L-arginine + ATP = L-arginyl-tRNA(Arg) + AMP + diphosphate. The chain is Arginine--tRNA ligase from Bacillus cereus (strain ATCC 14579 / DSM 31 / CCUG 7414 / JCM 2152 / NBRC 15305 / NCIMB 9373 / NCTC 2599 / NRRL B-3711).